Consider the following 389-residue polypeptide: Epidermis-specific secreted glycoprotein EP1 (389 aa).

Residues 1 to 24 (MARFFPLTLTILLFFIQRIDFCHT) form the signal peptide. The N-linked (GlcNAc...) (complex) asparagine glycan is linked to Asn29. The region spanning 88-193 (MRWVWEANRG…ASPGENVNGP (106 aa)) is the Bulb-type lectin domain. N-linked (GlcNAc...) asparagine glycosylation is found at Asn103, Asn230, and Asn235. A glycan (N-linked (GlcNAc...) (high mannose) asparagine) is linked at Asn274.

In terms of tissue distribution, in 14-day old seedlings, expressed in the epidermis and apical dome of the shoot and in the hypocotyl, cotyledon and epidermis of the root. In developing seeds, expressed in both the inner and outer epidermis of the integument.

The protein resides in the secreted. Its function is as follows. May be involved in the limitation of water flow through the outer epidermal cell wall, either by direct modification of wall structure or as a signal instructing the protoplast to restrict water transport across the cell wall. This Daucus carota (Wild carrot) protein is Epidermis-specific secreted glycoprotein EP1 (EP1).